The sequence spans 334 residues: Beta-hexosaminidase (334 aa).

Residues aspartate 60, arginine 68, arginine 133, and lysine 163–histidine 164 contribute to the substrate site. The active-site Proton donor/acceptor is the histidine 176. Residue aspartate 247 is the Nucleophile of the active site.

Belongs to the glycosyl hydrolase 3 family. NagZ subfamily.

The protein localises to the cytoplasm. It carries out the reaction Hydrolysis of terminal non-reducing N-acetyl-D-hexosamine residues in N-acetyl-beta-D-hexosaminides.. Its pathway is cell wall biogenesis; peptidoglycan recycling. In terms of biological role, plays a role in peptidoglycan recycling by cleaving the terminal beta-1,4-linked N-acetylglucosamine (GlcNAc) from peptide-linked peptidoglycan fragments, giving rise to free GlcNAc, anhydro-N-acetylmuramic acid and anhydro-N-acetylmuramic acid-linked peptides. This Xanthomonas oryzae pv. oryzae (strain MAFF 311018) protein is Beta-hexosaminidase.